Reading from the N-terminus, the 251-residue chain is HTH-type transcriptional regulator UlaR (251 aa).

The HTH deoR-type domain occupies glutamate 3–alanine 58. Residues valine 20–aspartate 39 constitute a DNA-binding region (H-T-H motif).

It is found in the cytoplasm. Its function is as follows. Represses ulaG and the ulaABCDEF operon. The polypeptide is HTH-type transcriptional regulator UlaR (Escherichia coli (strain SMS-3-5 / SECEC)).